We begin with the raw amino-acid sequence, 1242 residues long: Reverse gyrase 1 (1242 aa).

The segment at 6–46 (KVPPSIYTRSCPNCGGNISSQRLFNGSVCESCLKDDREFSN) adopts an RG N-terminal-type zinc-finger fold. Positions 16, 19, 34, and 37 each coordinate Zn(2+). ATP is bound by residues glutamine 93 and 110-117 (APPGLGKT). The Helicase ATP-binding domain maps to 97–298 (TIRFLRGESF…SLMGFRPGSS (202 aa)). The DEAD box signature appears at 214 to 217 (DDVD). The topoisomerase I stretch occupies residues 615 to 1242 (LSVKTTLFIV…ELYNEIQTIS (628 aa)). The Toprim domain maps to 619–785 (TTLFIVESPN…NIKRAEFHEV (167 aa)). Glutamate 625 contributes to the Mg(2+) binding site. The RG C-terminal-type; atypical zinc finger occupies 703–731 (IKKCEKGHQIVKDLSQNKCPICGSRIVTD). Residues cysteine 706, histidine 710, cysteine 721, and cysteine 724 each coordinate Zn(2+). Aspartate 754 contacts Mg(2+). The Topo IA-type catalytic domain maps to 801–1242 (NDNLVKSQIV…ELYNEIQTIS (442 aa)). Tyrosine 965 acts as the O-(5'-phospho-DNA)-tyrosine intermediate in catalysis.

The protein in the N-terminal section; belongs to the DEAD box helicase family. DDVD subfamily. It in the C-terminal section; belongs to the type IA topoisomerase family. In terms of assembly, monomer. The cofactor is Zn(2+). It depends on Mg(2+) as a cofactor.

Its subcellular location is the cytoplasm. It carries out the reaction ATP + H2O = ADP + phosphate + H(+). Its activity is regulated as follows. At least one of the two reverse gyrase proteins is inhibited by actinomycin D. Highly sensitive to NaCl concentrations, maximal positive supercoiling is observed with 10 mM NaCl; as NaCl rises, supercoiling decreases. At 300 mM NaCl relaxes but does not introduce positive supercoils into negatively supercoiled substrate, at 400 mM NaCl does not relax DNA. Its function is as follows. Modifies the topological state of DNA by introducing positive supercoils in an ATP-dependent process. Increases the linking number in steps of +1. Involved in homeostatic control of DNA topology in balance with type II topoisomerase 6 (TopoVI); levels of TopoVI are constant at 80 and 88 degrees Celsius and TopoVI is probably less active at 88 degrees (characterized enzyme is from S.shibatae B12), so reverse gyrase mediates most of the fine-tuning of DNA topology. Changes the DNA linking number step-by-step in a distributive manner. At low protein to DNA ratios mostly relaxes negatively supercoiled substrate, as ratios rise more positive supercoils are introduced. At 90 degrees Celsius introduces 19 positive supercoils into pTZ18R DNA (probably 2860 bp), less than TopR2. Relaxes negatively supercoiled DNA in the absence of ATP. It cleaves transiently a single DNA strand and remains covalently bound to the 5' DNA end through a tyrosine residue. May be involved in DNA damage response. Its activity is inhibited by the DNA-binding protein 7d (Sso7d), suggesting that the Sso7d activity might counteract the overwinding effect of reverse gyrase. Functionally, resolves 4-way Holliday junctions (HJ) with 20 bases in each arm in vitro, distorting the junction. Very high protein levels are required, but total enzyme content of the cell (there are 2 reverse gyrases in this organism) is estimated to be 20-200 molecules/cell. HJ resolution does not require either ATPase activity or the active tyrosine. The individual domains do not resolve HJs but do so when mixed. Also unwinds a fork substrate. There are 2 genes for this protein in the cell. During exponential growth this is the less expressed isoform (about 52 molecules per cell at 80 degrees Celsius, about 28 molecules at 88 degrees Celsius); this isoform is more active at higher temperature. Grows actively at both 80 and 88 degrees Celsius; survives a long exposure at 45 degrees Celsius without DNA replication or cell division occurring. Experiments using whole cell extracts do not distinguish which isoform is present, the results are probably a mixture of the two forms. This chain is Reverse gyrase 1, found in Saccharolobus solfataricus (strain ATCC 35092 / DSM 1617 / JCM 11322 / P2) (Sulfolobus solfataricus).